A 492-amino-acid chain; its full sequence is Cysteine--tRNA ligase (492 aa).

Residue C27 participates in Zn(2+) binding. The short motif at 29–39 (VTVYDLCHLGH) is the 'HIGH' region element. Residues C211, H236, and E240 each coordinate Zn(2+). Positions 268–272 (KMSKS) match the 'KMSKS' region motif. K271 lines the ATP pocket.

Belongs to the class-I aminoacyl-tRNA synthetase family. Monomer. Zn(2+) is required as a cofactor.

Its subcellular location is the cytoplasm. It carries out the reaction tRNA(Cys) + L-cysteine + ATP = L-cysteinyl-tRNA(Cys) + AMP + diphosphate. This is Cysteine--tRNA ligase from Prochlorococcus marinus subsp. pastoris (strain CCMP1986 / NIES-2087 / MED4).